The following is a 260-amino-acid chain: Carbonic anhydrase 2 (260 aa).

Position 2 is an N-acetylserine (Ser-2). Ser-2 bears the Phosphoserine mark. The region spanning 3–259 (HHWGYGKHNG…LKNRQIKASF (257 aa)) is the Alpha-carbonic anhydrase domain. Residue His-64 is the Proton donor/acceptor of the active site. Zn(2+)-binding residues include His-94, His-96, and His-119. Phosphoserine occurs at positions 165 and 172. Position 198 to 199 (198 to 199 (TT)) interacts with substrate.

It belongs to the alpha-carbonic anhydrase family. As to quaternary structure, interacts with SLC4A4. Interaction with SLC4A7 regulates SLC4A7 transporter activity. Interacts with SLC26A6 isoform 4 (via C-terminus cytoplasmic domain). Requires Zn(2+) as cofactor. It depends on Co(2+) as a cofactor.

The protein resides in the cytoplasm. It is found in the cell membrane. It carries out the reaction hydrogencarbonate + H(+) = CO2 + H2O. It catalyses the reaction urea = cyanamide + H2O. Activated by X-ray, histamine, L-adrenaline, L- and D-phenylalanine, L- and D-histidine, L-His-OMe and beta-Ala-His (carnosine). Competitively inhibited by saccharin, thioxolone, coumarins, 667-coumate, celecoxib (Celebrex), valdecoxib (Bextra), SC-125, SC-560, diclofenac, acetate, azide, bromide, sulfonamide derivatives such as acetazolamide (AZA), methazolamide (MZA), ethoxzolamide (EZA), dichlorophenamide (DCP), brinzolamide, dansylamide, thiabendazole-5-sulfonamide, trifluoromethane sulfonamide and N-hydroxysulfamide, fructose-based sugar sulfamate RWJ-37497, and Foscarnet (phosphonoformate trisodium salt). Repressed strongly by hydrogen sulfide(HS) and weakly by nitrate (NO(3)). Esterase activity weakly reduced by cyanamide. N-hydroxyurea interferes with zinc binding and inhibit activity. Its function is as follows. Catalyzes the reversible hydration of carbon dioxide. Can also hydrate cyanamide to urea. Stimulates the chloride-bicarbonate exchange activity of SLC26A6. Essential for bone resorption and osteoclast differentiation. Involved in the regulation of fluid secretion into the anterior chamber of the eye. Contributes to intracellular pH regulation in the duodenal upper villous epithelium during proton-coupled peptide absorption. The protein is Carbonic anhydrase 2 (CA2) of Homo sapiens (Human).